Consider the following 1040-residue polypeptide: Eukaryotic translation initiation factor 3 subunit A (1040 aa).

A coiled-coil region spans residues 92–121; the sequence is LKKFIELAEKKVTEAQTKADEIQSSLESAA. Residues 339–523 form the PCI domain; it reads MTKAASFVLL…GVLTFDSDVF (185 aa). Residues 608-906 are a coiled coil; it reads RVIIEKKKEA…AEARRAARKA (299 aa). Composition is skewed to basic and acidic residues over residues 617 to 632 and 795 to 901; these read AATD…EETR and EVSE…EARR. Disordered stretches follow at residues 617–641 and 795–1040; these read AATD…QQLQ and EVSE…QQNQ. 4 stretches are compositionally biased toward low complexity: residues 908-917, 945-955, 978-993, and 1004-1018; these read LEPAAPAARP, KEAAGGAAPEA, SGSS…NGAP, and SSSS…TPGS.

Belongs to the eIF-3 subunit A family. As to quaternary structure, component of the eukaryotic translation initiation factor 3 (eIF-3) complex.

The protein localises to the cytoplasm. In terms of biological role, RNA-binding component of the eukaryotic translation initiation factor 3 (eIF-3) complex, which is involved in protein synthesis of a specialized repertoire of mRNAs and, together with other initiation factors, stimulates binding of mRNA and methionyl-tRNAi to the 40S ribosome. The eIF-3 complex specifically targets and initiates translation of a subset of mRNAs involved in cell proliferation. The protein is Eukaryotic translation initiation factor 3 subunit A (tif32) of Aspergillus terreus (strain NIH 2624 / FGSC A1156).